The chain runs to 167 residues: NADH-quinone oxidoreductase subunit B (167 aa).

4 residues coordinate [4Fe-4S] cluster: C40, C41, C105, and C134.

It belongs to the complex I 20 kDa subunit family. In terms of assembly, NDH-1 is composed of 14 different subunits. Subunits NuoB, C, D, E, F, and G constitute the peripheral sector of the complex. [4Fe-4S] cluster is required as a cofactor.

The protein localises to the cell inner membrane. It carries out the reaction a quinone + NADH + 5 H(+)(in) = a quinol + NAD(+) + 4 H(+)(out). Its function is as follows. NDH-1 shuttles electrons from NADH, via FMN and iron-sulfur (Fe-S) centers, to quinones in the respiratory chain. The immediate electron acceptor for the enzyme in this species is believed to be ubiquinone. Couples the redox reaction to proton translocation (for every two electrons transferred, four hydrogen ions are translocated across the cytoplasmic membrane), and thus conserves the redox energy in a proton gradient. This Campylobacter jejuni subsp. jejuni serotype O:6 (strain 81116 / NCTC 11828) protein is NADH-quinone oxidoreductase subunit B.